Reading from the N-terminus, the 581-residue chain is MKYSTVFTALTALFAQASATAIPAVRSPLAPRQSTTASCANSATSRSCWGEYSIDTNWYDVTPNTGVTREYWLSVENSTITPDGYTRSAMTFNGTVPGPAITADWGDNLIIHVTNNLQHNGTSIHWHGIRQLGSLEYDGVPGVTQCPIAPGDTLTYKFQATQYGTTWYHSHFSLQYADGLFGPLIINGPATADYDEDVGAIFLQDWAHKSVFEIWDSARQGAPPALENTLMNGTNIYDCSASTDANCVGGGKKFELTFVEGTKYRLRLINVGIDSHFEFAIDNHTLTVIANDLVPIVPYTTDTLLIGIGQRYDVIVEANAAADNYWIRGNWGTTCSSNSEAANATGILRYDSSSTVDPTSVGVTPRGTCADEPVASLVPHLALDVGGYSLVDEQVSFAFTNYFTWTINSSSLLLDWSSPTTLKIFNNETIFPTDYNVVALNQTDANEEWVVYVIEDLTGFGIWHPIHLHGHDFYVVAQETDVFSATKSPANFNLVNPPRRDVAALPGNGYLAIAFKLDNPGSWLLHCHIAWHASEGLAMQFVESQSSIAIGMSDTDIFEDTCANWNAYTPTELFAEDDSGI.

Positions 1-19 (MKYSTVFTALTALFAQASA) are cleaved as a signal peptide. Plastocyanin-like domains are found at residues 74–191 (SVEN…GPAT) and 197–353 (DVGA…YDSS). 3 N-linked (GlcNAc...) asparagine glycosylation sites follow: N77, N93, and N120. H125, H127, H169, and H171 together coordinate Cu cation. An intrachain disulfide couples C146 to C562. N-linked (GlcNAc...) asparagine glycosylation is found at N232, N283, N343, N408, N427, and N441. Residues 413-547 (LLDWSSPTTL…AMQFVESQSS (135 aa)) form the Plastocyanin-like 3 domain. The Cu cation site is built by H464, H467, H469, H526, C527, H528, and H532.

The protein belongs to the multicopper oxidase family. It depends on Cu cation as a cofactor.

The protein resides in the secreted. The enzyme catalyses 4 hydroquinone + O2 = 4 benzosemiquinone + 2 H2O. Lignin degradation and detoxification of lignin-derived products. This Botryotinia fuckeliana (Noble rot fungus) protein is Laccase-2 (lcc2).